Here is a 104-residue protein sequence, read N- to C-terminus: Thioredoxin-3 (104 aa).

The region spanning 2 to 104 (SKVIHVTSNE…TLRSTLEANI (103 aa)) is the Thioredoxin domain. Catalysis depends on nucleophile residues Cys-31 and Cys-34. A disulfide bond links Cys-31 and Cys-34.

The protein belongs to the thioredoxin family.

Functionally, participates in various redox reactions through the reversible oxidation of its active center dithiol to a disulfide and catalyzes dithiol-disulfide exchange reactions. This chain is Thioredoxin-3 (trxC), found in Dictyostelium discoideum (Social amoeba).